A 385-amino-acid polypeptide reads, in one-letter code: MFKKTKITILGATGSIGDSTLAVIRETNDFEVFALTAFSNVEKLAELCQEFKPKFAVVPDLSKKQKLQSLVTDVEVLVGESGLEKVSSLAEVDIVMSAIVGIAGLKPTFAAAKAGKKILLANKESLVTAGHLLIDEVVKNNAQLIPVDSEHNAIFQCIDNHDKKCLPEIDKIILTASGGPFRDKQLHELTDVTPEQACNHPNWQMGRKISVDSSTMVNKALEVIEAYWLFSVSADKIGVLIHPQSVIHSMVRYVDGSYIAQLGVPDMKTPIANAMYYPKRGSVNVESLDFTKYQLTFREACFERFGALKIVFNNLQNKNYAANIVFNAANEELVAAFLNKKIKYLEIIEVNKKVTKELNFENPKNIEEVFEIDRKTREYVDSVLG.

Residues Thr13, Gly14, Ser15, Ile16, Asn40, and Asn122 each contribute to the NADPH site. Residue Lys123 coordinates 1-deoxy-D-xylulose 5-phosphate. Glu124 contributes to the NADPH binding site. Asp148 contacts Mn(2+). Positions 149, 150, 177, and 200 each coordinate 1-deoxy-D-xylulose 5-phosphate. Glu150 contacts Mn(2+). An NADPH-binding site is contributed by Gly206. Ser213, Asn218, Lys219, and Glu222 together coordinate 1-deoxy-D-xylulose 5-phosphate. Glu222 is a binding site for Mn(2+).

It belongs to the DXR family. The cofactor is Mg(2+). Mn(2+) is required as a cofactor.

The enzyme catalyses 2-C-methyl-D-erythritol 4-phosphate + NADP(+) = 1-deoxy-D-xylulose 5-phosphate + NADPH + H(+). It functions in the pathway isoprenoid biosynthesis; isopentenyl diphosphate biosynthesis via DXP pathway; isopentenyl diphosphate from 1-deoxy-D-xylulose 5-phosphate: step 1/6. Catalyzes the NADPH-dependent rearrangement and reduction of 1-deoxy-D-xylulose-5-phosphate (DXP) to 2-C-methyl-D-erythritol 4-phosphate (MEP). This is 1-deoxy-D-xylulose 5-phosphate reductoisomerase from Francisella tularensis subsp. novicida (strain U112).